The chain runs to 337 residues: Ornithine carbamoyltransferase (337 aa).

Carbamoyl phosphate-binding positions include S56–T59, Q83, R107, and H134–Q137. Residues N168, D232, and S236–M237 each bind L-ornithine. Carbamoyl phosphate contacts are provided by residues C274–L275 and R320.

This sequence belongs to the aspartate/ornithine carbamoyltransferase superfamily. OTCase family.

The protein localises to the cytoplasm. It catalyses the reaction carbamoyl phosphate + L-ornithine = L-citrulline + phosphate + H(+). It participates in amino-acid biosynthesis; L-arginine biosynthesis; L-arginine from L-ornithine and carbamoyl phosphate: step 1/3. Functionally, reversibly catalyzes the transfer of the carbamoyl group from carbamoyl phosphate (CP) to the N(epsilon) atom of ornithine (ORN) to produce L-citrulline. In Shigella flexneri, this protein is Ornithine carbamoyltransferase (argI).